The primary structure comprises 526 residues: Secreted triacylglycerol lipase LIP4 (526 aa).

Positions 1–26 are cleaved as a signal peptide; it reads MVRLSYVRFGVAWCIAIIIVSGFSNA. Residue Asn186 is glycosylated (N-linked (GlcNAc...) asparagine). Catalysis depends on Ser195, which acts as the Nucleophile. An N-linked (GlcNAc...) asparagine glycan is attached at Asn228. Residues Asp342 and His376 contribute to the active site. N-linked (GlcNAc...) asparagine glycosylation occurs at Asn377. The disordered stretch occupies residues 412-526; the sequence is TGPSASSSAG…TMPAPPLMER (115 aa). Low complexity-rich tracts occupy residues 413-423 and 430-457; these read GPSASSSAGGP and TGGH…HAPA. N-linked (GlcNAc...) asparagine glycosylation occurs at Asn462. The span at 480–490 shows a compositional bias: low complexity; sequence PSTGATSPAPS. Pro residues predominate over residues 516–526; it reads RTMPAPPLMER.

It belongs to the AB hydrolase superfamily. Lipase family. Class Lip subfamily.

It is found in the secreted. The enzyme catalyses a triacylglycerol + H2O = a diacylglycerol + a fatty acid + H(+). The catalysed reaction is a monoacylglycerol + H2O = glycerol + a fatty acid + H(+). It catalyses the reaction a diacylglycerol + H2O = a monoacylglycerol + a fatty acid + H(+). Functionally, secreted lipase that hydrolyzes acylglycerol lipids such as triacylglycerols and consequently releases free fatty acid. Can hydrolyze 4-nitrophenyl palmitate to release 4-nitrophenol and palmitoic acid. Due to an absence of fatty acid synthase genes in Malassezia species, secretory lipases are essential for the yeast to generate free fatty acids from degradation of sebum and assimilate them as lipid sources for growth. Plays important roles not only in lipid metabolism but also in the immune response of host cells and pathogenesis. The sequence is that of Secreted triacylglycerol lipase LIP4 from Malassezia furfur (Pityriasis versicolor infection agent).